Reading from the N-terminus, the 197-residue chain is Segregation and condensation protein B (197 aa).

Belongs to the ScpB family. In terms of assembly, homodimer. Homodimerization may be required to stabilize the binding of ScpA to the Smc head domains. Component of a cohesin-like complex composed of ScpA, ScpB and the Smc homodimer, in which ScpA and ScpB bind to the head domain of Smc. The presence of the three proteins is required for the association of the complex with DNA.

The protein localises to the cytoplasm. Its function is as follows. Participates in chromosomal partition during cell division. May act via the formation of a condensin-like complex containing Smc and ScpA that pull DNA away from mid-cell into both cell halves. The sequence is that of Segregation and condensation protein B from Malacoplasma penetrans (strain HF-2) (Mycoplasma penetrans).